Here is a 223-residue protein sequence, read N- to C-terminus: UPF0173 metal-dependent hydrolase THA_544 (223 aa).

It belongs to the UPF0173 family.

This chain is UPF0173 metal-dependent hydrolase THA_544, found in Thermosipho africanus (strain TCF52B).